Reading from the N-terminus, the 37-residue chain is Cytochrome b6-f complex subunit 5 (37 aa).

Residues 5–25 (LLCGIVLGLIPITLAGLFVAA) form a helical membrane-spanning segment.

It belongs to the PetG family. As to quaternary structure, the 4 large subunits of the cytochrome b6-f complex are cytochrome b6, subunit IV (17 kDa polypeptide, PetD), cytochrome f and the Rieske protein, while the 4 small subunits are PetG, PetL, PetM and PetN. The complex functions as a dimer.

It localises to the cellular thylakoid membrane. Its function is as follows. Component of the cytochrome b6-f complex, which mediates electron transfer between photosystem II (PSII) and photosystem I (PSI), cyclic electron flow around PSI, and state transitions. PetG is required for either the stability or assembly of the cytochrome b6-f complex. This Cyanothece sp. (strain PCC 7425 / ATCC 29141) protein is Cytochrome b6-f complex subunit 5.